A 1118-amino-acid chain; its full sequence is Receptor-type guanylate cyclase gcy-2 (1118 aa).

Residues 1–21 (MVSSILKFVILIHSTFHSTFA) form the signal peptide. Topologically, residues 22 to 494 (QNLPDTTVAP…FCPISFWEQY (473 aa)) are extracellular. 6 N-linked (GlcNAc...) asparagine glycosylation sites follow: N222, N351, N361, N387, N420, and N452. A helical membrane pass occupies residues 495-515 (MILAIVSISVIVLMVIIMIIG). At 516–1118 (CLCVISAKHA…FKMDTLKVAN (603 aa)) the chain is on the cytoplasmic side. In terms of domain architecture, Protein kinase spans 558–875 (LQSAPSISTG…EGFDSVTVFF (318 aa)). Positions 872 to 1002 (TVFFSDVVKF…DTVNTASRME (131 aa)) constitute a Guanylate cyclase domain. Residues 1076 to 1103 (WITPPAPKPEIRSVSSHGSRPPSVYDPL) are disordered.

Belongs to the adenylyl cyclase class-4/guanylyl cyclase family. As to expression, expressed bilaterally in AWA and ASI sensory neurons and in RIA and PVT interneurons.

Its subcellular location is the cell membrane. It catalyses the reaction GTP = 3',5'-cyclic GMP + diphosphate. Its function is as follows. Guanylate cyclase involved in the production of the second messenger cGMP. The sequence is that of Receptor-type guanylate cyclase gcy-2 from Caenorhabditis elegans.